The primary structure comprises 463 residues: 23S rRNA (uracil(1939)-C(5))-methyltransferase RlmD (463 aa).

The region spanning 6–76 (KSRKPQQPEY…KRLEEAEMVA (71 aa)) is the TRAM domain. [4Fe-4S] cluster-binding residues include C90, C96, C99, and C178. Residues Q288, F317, N322, E341, D368, and D389 each contribute to the S-adenosyl-L-methionine site. The Nucleophile role is filled by C415.

The protein belongs to the class I-like SAM-binding methyltransferase superfamily. RNA M5U methyltransferase family. RlmD subfamily.

The enzyme catalyses uridine(1939) in 23S rRNA + S-adenosyl-L-methionine = 5-methyluridine(1939) in 23S rRNA + S-adenosyl-L-homocysteine + H(+). In terms of biological role, catalyzes the formation of 5-methyl-uridine at position 1939 (m5U1939) in 23S rRNA. The polypeptide is 23S rRNA (uracil(1939)-C(5))-methyltransferase RlmD (Acinetobacter baumannii (strain SDF)).